A 661-amino-acid polypeptide reads, in one-letter code: Peroxisomal acyl-coenzyme A oxidase 1 (661 aa).

A Phosphoserine modification is found at serine 26. Lysine 65 carries the post-translational modification N6-acetyllysine. Residues lysine 89 and lysine 90 each carry the N6-succinyllysine modification. Threonine 139 serves as a coordination point for FAD. At lysine 159 the chain carries N6-succinyllysine. Glycine 178 is a binding site for FAD. Lysine 216 is modified (N6-acetyllysine). N6-succinyllysine is present on lysine 241. Residues lysine 255, lysine 267, and lysine 272 each carry the N6-acetyllysine modification. Residue lysine 349 is modified to N6-succinyllysine. Glutamate 421 functions as the Proton acceptor in the catalytic mechanism. An N6-acetyllysine; alternate mark is found at lysine 437 and lysine 446. 2 positions are modified to N6-succinyllysine; alternate: lysine 437 and lysine 446. Position 500 is an N6-acetyllysine (lysine 500). Lysine 512 is modified (N6-acetyllysine; alternate). Lysine 512 is subject to N6-succinyllysine; alternate. Lysine 542 is subject to N6-succinyllysine. Lysine 637 is subject to N6-acetyllysine; alternate. At lysine 637 the chain carries N6-succinyllysine; alternate. An N6-succinyllysine modification is found at lysine 643. Serine 649 bears the Phosphoserine mark. Lysine 652 carries the N6-acetyllysine modification. The residue at position 655 (lysine 655) is an N6-succinyllysine. A Microbody targeting signal motif is present at residues 659–661; that stretch reads SKL.

It belongs to the acyl-CoA oxidase family. In terms of assembly, homodimer. Interacts with LONP2. It depends on FAD as a cofactor. As to expression, highest levels of isoform 1 are found in liver and kidney while highest levels of isoform 2 are found in white adipose tissue. Isoform 1 is expressed at higher levels than isoform 2 in liver and kidney while isoform 2 is expressed at higher levels in brain, heart, lung, muscle, white adipose tissue and testis.

It is found in the peroxisome. The catalysed reaction is a 2,3-saturated acyl-CoA + O2 = a (2E)-enoyl-CoA + H2O2. The enzyme catalyses hexadecanoyl-CoA + O2 = (2E)-hexadecenoyl-CoA + H2O2. It catalyses the reaction dodecanoyl-CoA + O2 = (2E)-dodecenoyl-CoA + H2O2. It carries out the reaction octanoyl-CoA + O2 = (2E)-octenoyl-CoA + H2O2. The catalysed reaction is decanoyl-CoA + O2 = (2E)-decenoyl-CoA + H2O2. The enzyme catalyses tetradecanoyl-CoA + O2 = (2E)-tetradecenoyl-CoA + H2O2. It catalyses the reaction hexadecanedioyl-CoA + O2 = (2E)-hexadecenedioyl-CoA + H2O2. It carries out the reaction tetracosanoyl-CoA + O2 = (2E)-tetracosenoyl-CoA + H2O2. The catalysed reaction is glutaryl-CoA + O2 = (2E)-glutaconyl-CoA + H2O2. The enzyme catalyses hexanoyl-CoA + O2 = (2E)-hexenoyl-CoA + H2O2. It catalyses the reaction octadecanoyl-CoA + O2 = (2E)-octadecenoyl-CoA + H2O2. It carries out the reaction (5Z,8Z,11Z,14Z,17Z)-eicosapentaenoyl-CoA + O2 = (2E,5Z,8Z,11Z,14Z,17Z)-icosahexaenoyl-CoA + H2O2. The catalysed reaction is (6Z,9Z,12Z,15Z,18Z,21Z)-tetracosahexaenoyl-CoA + O2 = (2E,6Z,9Z,12Z,15Z,18Z,21Z)-tetracosaheptaenoyl-CoA + H2O2. The protein operates within lipid metabolism; peroxisomal fatty acid beta-oxidation. Functionally, involved in the initial and rate-limiting step of peroxisomal beta-oxidation of straight-chain saturated and unsaturated very-long-chain fatty acids. Catalyzes the desaturation of fatty acyl-CoAs such as palmitoyl-CoA (hexadecanoyl-CoA) to 2-trans-enoyl-CoAs ((2E)-enoyl-CoAs) such as (2E)-hexadecenoyl-CoA, and donates electrons directly to molecular oxygen (O(2)), thereby producing hydrogen peroxide (H(2)O(2)). In terms of biological role, shows highest activity against medium-chain fatty acyl-CoAs. Shows optimum activity with a chain length of 10 carbons (decanoyl-CoA) in vitro. Its function is as follows. Is active against a much broader range of substrates and shows activity towards long-chain acyl-CoAs. In Mus musculus (Mouse), this protein is Peroxisomal acyl-coenzyme A oxidase 1.